The following is a 151-amino-acid chain: Putative pre-16S rRNA nuclease (151 aa).

The protein belongs to the YqgF nuclease family.

The protein resides in the cytoplasm. Functionally, could be a nuclease involved in processing of the 5'-end of pre-16S rRNA. This Prochlorococcus marinus (strain MIT 9515) protein is Putative pre-16S rRNA nuclease.